The chain runs to 193 residues: Interleukin-18 (193 aa).

Residues 1–36 constitute a propeptide that is removed on maturation; the sequence is MAAEQVEDNCISFVEMKFINNTLYFVAENDEDLESD.

Belongs to the IL-1 family. As to quaternary structure, forms a ternary complex with ligand-binding receptor subunit IL18R1 and signaling receptor subunit IL18RAP at the plasma membrane. Mature IL18 first binds to IL18R1 forming a low affinity binary complex, which then interacts with IL18RAP to form a high affinity ternary complex that signals inside the cell. Interacts with cargo receptor TMED10; the interaction mediates the translocation from the cytoplasm into the ERGIC (endoplasmic reticulum-Golgi intermediate compartment) and thereby secretion. In terms of processing, the pro-IL-18 precursor is processed by CASP1, CASP4 or CASP5 to yield its mature, active form. The pro-IL-18 precursor features autoinhibitory interactions between the propeptide and the post-cleavage-site region, preventing recognition by the IL18R1 receptor. Processing by CASP1, CASP4 or CASP5 induces conformational changes to generate critical receptor-binding sites. The mature form is then secreted and released in the extracellular milieu by passing through the gasdermin-D (GSDMD) pore. In contrast, cleavage by CASP3 inactivates IL18.

The protein localises to the cytoplasm. It is found in the cytosol. It localises to the secreted. Pro-inflammatory cytokine primarily involved in epithelial barrier repair, polarized T-helper 1 (Th1) cell and natural killer (NK) cell immune responses. Upon binding to IL18R1 and IL18RAP, forms a signaling ternary complex which activates NF-kappa-B, triggering synthesis of inflammatory mediators. Synergizes with IL12/interleukin-12 to induce IFNG synthesis from T-helper 1 (Th1) cells and natural killer (NK) cells. Involved in transduction of inflammation downstream of pyroptosis: its mature form is specifically released in the extracellular milieu by passing through the gasdermin-D (GSDMD) pore. This is Interleukin-18 (IL18) from Boselaphus tragocamelus (Nilgai).